Reading from the N-terminus, the 737-residue chain is Oligopeptide transporter 3 (737 aa).

A run of 16 helical transmembrane segments spans residues Ala45 to Tyr65, Pro69 to Ala89, Val117 to Ile137, Phe153 to Ile173, Phe215 to Ile235, Val255 to Ser275, Ile289 to Trp309, Leu357 to Thr377, Trp418 to Trp438, Trp446 to Ile466, Ile478 to Phe498, Ala532 to Leu552, Val604 to Phe624, Trp629 to Thr649, Pro650 to Tyr670, and Val681 to Leu701.

The protein belongs to the oligopeptide OPT transporter (TC 2.A.67.1) family. Strong expression in flowers, leaves and roots. Preferentially expressed in the vascular tissues of seedlings and mature plants as well as in pollen and developing embryos.

It is found in the membrane. Functionally, may be involved in the translocation of tetra- and pentapeptides across the cellular membrane in an energy-dependent manner. Also acts as a metal transporter that could be a component of the copper transport machinery. Essential for early embryo development. The protein is Oligopeptide transporter 3 (OPT3) of Arabidopsis thaliana (Mouse-ear cress).